The chain runs to 732 residues: Anthranilate synthase (732 aa).

Residues 533-728 (RVLLVDHDDS…MDRLAAGALT (196 aa)) enclose the Glutamine amidotransferase type-1 domain. An L-glutamine-binding site is contributed by 583–585 (GPG). The active-site Nucleophile; for GATase activity is the cysteine 610. Residues glutamine 614 and 660 to 661 (SL) each bind L-glutamine. Active-site for GATase activity residues include histidine 699 and glutamate 701.

It carries out the reaction chorismate + L-glutamine = anthranilate + pyruvate + L-glutamate + H(+). The protein operates within amino-acid biosynthesis; L-tryptophan biosynthesis; L-tryptophan from chorismate: step 1/5. The protein is Anthranilate synthase (trpE(G)) of Azospirillum brasilense.